A 297-amino-acid polypeptide reads, in one-letter code: MRPALSDYQHVASGKVREIYRVDDEHLLLVASDRISAYDYVLDSTIPDKGRVLTAMSAFFFGLVDAPNHLAGPPDDPRIPDEVLGRALVVRRLEMLPVECVARGYLTGSGLLDYQATGKVCGIALPPGLVEASRFATPLFTPATKAALGDHDENISFDRVVEMVGALRANQLRDRTLQTYVQAADHALTRGIIIADTKFEFGIDRHGNLLLADEIFTPDSSRYWPADDYRAGVVQTSFDKQFVRSWLTGSESGWDRGSDRPPPPLPEHIVEATRARYINAYERISELKFDDWIGPGA.

The protein belongs to the SAICAR synthetase family.

The enzyme catalyses 5-amino-1-(5-phospho-D-ribosyl)imidazole-4-carboxylate + L-aspartate + ATP = (2S)-2-[5-amino-1-(5-phospho-beta-D-ribosyl)imidazole-4-carboxamido]succinate + ADP + phosphate + 2 H(+). It functions in the pathway purine metabolism; IMP biosynthesis via de novo pathway; 5-amino-1-(5-phospho-D-ribosyl)imidazole-4-carboxamide from 5-amino-1-(5-phospho-D-ribosyl)imidazole-4-carboxylate: step 1/2. This is Phosphoribosylaminoimidazole-succinocarboxamide synthase from Mycobacterium tuberculosis (strain ATCC 25177 / H37Ra).